Consider the following 530-residue polypeptide: UPF0422 protein lpl2888 (530 aa).

The N-terminal stretch at 1-19 is a signal peptide; sequence MKFKKIILALACLSSPLYA. Residues 20 to 66 are a coiled coil; it reads DQDQQLKSEIQRLQHQAEDLQAQLNRLQKQLANHKSSQQKHEQQAAT. The interval 50 to 81 is disordered; the sequence is LANHKSSQQKHEQQAATKPAEPQSKPTVKSGA.

Belongs to the UPF0422 family.

This chain is UPF0422 protein lpl2888, found in Legionella pneumophila (strain Lens).